Here is a 146-residue protein sequence, read N- to C-terminus: Ribosome maturation factor RimP (146 aa).

This sequence belongs to the RimP family.

Its subcellular location is the cytoplasm. Required for maturation of 30S ribosomal subunits. This is Ribosome maturation factor RimP from Dechloromonas aromatica (strain RCB).